The following is a 373-amino-acid chain: Chorismate synthase (373 aa).

R46 is a binding site for NADP(+). FMN contacts are provided by residues 123–125 (RSS), 251–252 (NA), G295, 310–314 (KPTPS), and R337.

It belongs to the chorismate synthase family. The cofactor is FMNH2.

It carries out the reaction 5-O-(1-carboxyvinyl)-3-phosphoshikimate = chorismate + phosphate. It functions in the pathway metabolic intermediate biosynthesis; chorismate biosynthesis; chorismate from D-erythrose 4-phosphate and phosphoenolpyruvate: step 7/7. In terms of biological role, catalyzes the anti-1,4-elimination of the C-3 phosphate and the C-6 proR hydrogen from 5-enolpyruvylshikimate-3-phosphate (EPSP) to yield chorismate, which is the branch point compound that serves as the starting substrate for the three terminal pathways of aromatic amino acid biosynthesis. This reaction introduces a second double bond into the aromatic ring system. The chain is Chorismate synthase from Methanococcus maripaludis (strain DSM 14266 / JCM 13030 / NBRC 101832 / S2 / LL).